A 190-amino-acid polypeptide reads, in one-letter code: Pyridoxal 5'-phosphate synthase subunit PdxT (190 aa).

46–48 (GES) contacts L-glutamine. C78 acts as the Nucleophile in catalysis. Residues R105 and 138–139 (IR) contribute to the L-glutamine site. Active-site charge relay system residues include H174 and E176.

The protein belongs to the glutaminase PdxT/SNO family. As to quaternary structure, in the presence of PdxS, forms a dodecamer of heterodimers. Only shows activity in the heterodimer.

It catalyses the reaction aldehydo-D-ribose 5-phosphate + D-glyceraldehyde 3-phosphate + L-glutamine = pyridoxal 5'-phosphate + L-glutamate + phosphate + 3 H2O + H(+). The enzyme catalyses L-glutamine + H2O = L-glutamate + NH4(+). It participates in cofactor biosynthesis; pyridoxal 5'-phosphate biosynthesis. Functionally, catalyzes the hydrolysis of glutamine to glutamate and ammonia as part of the biosynthesis of pyridoxal 5'-phosphate. The resulting ammonia molecule is channeled to the active site of PdxS. This is Pyridoxal 5'-phosphate synthase subunit PdxT from Bifidobacterium longum (strain NCC 2705).